Reading from the N-terminus, the 585-residue chain is Potassium-transporting ATPase potassium-binding subunit (585 aa).

Transmembrane regions (helical) follow at residues 25–45, 84–104, 152–172, 194–214, 275–295, 307–327, 345–365, 368–388, 397–417, 437–457, 502–522, and 547–567; these read IIIFIYLGITSIFSYVLSFYI, YFINLLLFNFFAGLISFLVIM, FVITGLMFLSAGTGFAASMAF, IFDLILPLSILVTIILILAGV, LEFVSFTIIPLGSLMALGIVF, VIMFFFVFDGLFAFFGEYVGV, AIGVSQSSIFAVGATLTSTGA, GALVSYTPAGIIGVLIGLLLN, GVLNIFMYIIFTVFIGSLMVG, LSLVTHPLLVVIPLGITLMIP, LDGVIMLLGRYLLMGFQLVIA, and LLLISAMLIIGLLSYFPIIVL.

It belongs to the KdpA family. In terms of assembly, the system is composed of three essential subunits: KdpA, KdpB and KdpC.

The protein resides in the cell membrane. Part of the high-affinity ATP-driven potassium transport (or Kdp) system, which catalyzes the hydrolysis of ATP coupled with the electrogenic transport of potassium into the cytoplasm. This subunit binds the extracellular potassium ions and delivers the ions to the membrane domain of KdpB through an intramembrane tunnel. This chain is Potassium-transporting ATPase potassium-binding subunit, found in Thermoplasma volcanium (strain ATCC 51530 / DSM 4299 / JCM 9571 / NBRC 15438 / GSS1).